We begin with the raw amino-acid sequence, 1079 residues long: Intraflagellar transport protein 80 (1079 aa).

Residues 495–514 form a disordered region; sequence GDMIRPSTVQNQPSTQGLPN. The segment covering 501 to 514 has biased composition (polar residues); that stretch reads STVQNQPSTQGLPN.

It localises to the cell projection. The protein localises to the cilium. The protein resides in the flagellum. Its subcellular location is the cytoplasm. It is found in the cytoskeleton. It localises to the flagellum axoneme. The protein localises to the flagellum basal body. Its function is as follows. Component of the intraflagellar transport complex B (IFT-B) involved in flagellar assembly. The chain is Intraflagellar transport protein 80 from Giardia intestinalis (strain ATCC 50803 / WB clone C6) (Giardia lamblia).